Consider the following 432-residue polypeptide: Patatin-like phospholipase domain-containing protein 5 (432 aa).

In terms of domain architecture, PNPLA spans 12-181 (LSFSGSGYMG…SNNLPFSDCP (170 aa)). A GXGXXG motif is present at residues 16 to 21 (GSGYMG). Residues 47-51 (GSSSG) carry the GXSXG motif. The active-site Nucleophile is Ser-49. The active-site Proton acceptor is Asp-168. Positions 168-170 (DGA) match the DGA/G motif. Residues 404–423 (ADSGLLRQQRGTAPSGNRPL) form a disordered region.

The catalysed reaction is a triacylglycerol + H2O = a diacylglycerol + a fatty acid + H(+). Has abundant triacylglycerol lipase activity. This Mus musculus (Mouse) protein is Patatin-like phospholipase domain-containing protein 5.